The following is a 308-amino-acid chain: Paired box protein 3 homolog (308 aa).

A DNA-binding region (paired) is located at residues 13–140; sequence GQGRVNQLGG…PAIKRLIGNK (128 aa). Residues 16–72 form a PAI subdomain region; sequence RVNQLGGVFINGRPLPIHVRHAIISMAKKGIKPCHISRQLKVSHGAVSKILNRYAET. Residues 92–140 are RED subdomain; the sequence is AVEKEILIACDENPQMSAAELRDWLIHKDICTKGNAPTVPAIKRLIGNK. A disordered region spans residues 168–191; that stretch reads CSKSSSDDEEGSSPSNDASSRRNR. Residues 187 to 246 constitute a DNA-binding region (homeobox); that stretch reads SRRNRTSFTAEQLDVLENAFRADTYPHANARESISKETGLSEEKIMTWFSNRRARCRKNM.

Belongs to the paired homeobox family.

The protein resides in the nucleus. Functionally, transcriptional activator. Regulates the lateral/ventral epidermal cell fate decision. This Caenorhabditis elegans protein is Paired box protein 3 homolog.